Reading from the N-terminus, the 391-residue chain is tRNA(Met) cytidine acetate ligase (391 aa).

ATP-binding positions include Ile7 to Gln20, Gly101, Asn153, and Arg178.

This sequence belongs to the TmcAL family.

The protein resides in the cytoplasm. It catalyses the reaction cytidine(34) in elongator tRNA(Met) + acetate + ATP = N(4)-acetylcytidine(34) in elongator tRNA(Met) + AMP + diphosphate. In terms of biological role, catalyzes the formation of N(4)-acetylcytidine (ac(4)C) at the wobble position of elongator tRNA(Met), using acetate and ATP as substrates. First activates an acetate ion to form acetyladenylate (Ac-AMP) and then transfers the acetyl group to tRNA to form ac(4)C34. In Latilactobacillus sakei subsp. sakei (strain 23K) (Lactobacillus sakei subsp. sakei), this protein is tRNA(Met) cytidine acetate ligase.